A 515-amino-acid chain; its full sequence is Putative pumilio homolog 8, chloroplastic (515 aa).

The disordered stretch occupies residues 1–33; it reads MMRGEFGEASSLSRSPSSPLQTEPHPQSPKFYR. Residues 1-70 constitute a chloroplast transit peptide; it reads MMRGEFGEAS…LSSYFSNGLC (70 aa). Positions 10–20 are enriched in low complexity; sequence SSLSRSPSSPL. A PUM-HD domain is found at 174–515; it reads SGVGALFDHQ…RIFSRNLLKN (342 aa). Pumilio repeat units lie at residues 198-233, 234-269, 270-308, 310-345, 346-381, 382-417, 418-456, and 457-490; these read EFQGYVYFMAKDQHGCRFLQWIFEDGSALDALVIFS, EVIPHVVELMMDPFGNYLMQKLLDVCNEEQRTQIIL, MVTSEPGQLIRISLNAYGTRVVQRLVESIKTRKQISLVK, ALRPGFLNLIRDLNGNHVIQRCLQCLSTEDNEFIFE, DATKFCIDIATHRHGCCVLQKCIAYSSGLQREKLVT, EISRNSLFLAQDPYGNYAVQFVLELRDFSAIAAMLA, QLKGHYVELSMQKFSSHMVERCLTHCPESRPQIVRELIS, and VPHFDILIQDPYANFVIQAALAVTKGSLHATLVE.

Its subcellular location is the plastid. It localises to the chloroplast. The protein localises to the cytoplasm. Functionally, sequence-specific RNA-binding protein that regulates translation and mRNA stability by binding the 3'-UTR of target mRNAs. The chain is Putative pumilio homolog 8, chloroplastic (APUM8) from Arabidopsis thaliana (Mouse-ear cress).